Consider the following 404-residue polypeptide: Pectate lyase E (404 aa).

The signal sequence occupies residues 1–41 (MNNSRMSSVSTQKTTGRSALGTKSALAAIIATTMMVSVASA). Ca(2+) contacts are provided by aspartate 182 and aspartate 225. Residue arginine 278 is part of the active site.

It belongs to the polysaccharide lyase 1 family. PLBC subfamily. Ca(2+) serves as cofactor.

It localises to the secreted. It catalyses the reaction Eliminative cleavage of (1-&gt;4)-alpha-D-galacturonan to give oligosaccharides with 4-deoxy-alpha-D-galact-4-enuronosyl groups at their non-reducing ends.. The protein operates within glycan metabolism; pectin degradation; 2-dehydro-3-deoxy-D-gluconate from pectin: step 2/5. Involved in maceration and soft-rotting of plant tissue. Pectate lyases have been implicated as pathogenicity factors which induce maceration or rotting of plant tissue. PelE is sufficient to induce these effects under laboratory conditions. The sequence is that of Pectate lyase E (pelE) from Dickeya dadantii (strain 3937) (Erwinia chrysanthemi (strain 3937)).